Reading from the N-terminus, the 184-residue chain is TATA-box-binding protein (184 aa).

Tandem repeats lie at residues 9-85 and 100-178.

Belongs to the TBP family.

Functionally, general factor that plays a role in the activation of archaeal genes transcribed by RNA polymerase. Binds specifically to the TATA box promoter element which lies close to the position of transcription initiation. In Picrophilus torridus (strain ATCC 700027 / DSM 9790 / JCM 10055 / NBRC 100828 / KAW 2/3), this protein is TATA-box-binding protein.